Consider the following 437-residue polypeptide: Phosphomethylpyrimidine synthase (437 aa).

Substrate contacts are provided by residues Asn-69, Met-98, Tyr-127, His-163, 185-187 (SRG), 226-229 (DACR), and Glu-265. His-269 provides a ligand contact to Zn(2+). Substrate is bound at residue Tyr-292. His-333 lines the Zn(2+) pocket. [4Fe-4S] cluster is bound by residues Cys-409, Cys-412, and Cys-416.

This sequence belongs to the ThiC family. Requires [4Fe-4S] cluster as cofactor.

It carries out the reaction 5-amino-1-(5-phospho-beta-D-ribosyl)imidazole + S-adenosyl-L-methionine = 4-amino-2-methyl-5-(phosphooxymethyl)pyrimidine + CO + 5'-deoxyadenosine + formate + L-methionine + 3 H(+). The protein operates within cofactor biosynthesis; thiamine diphosphate biosynthesis. Functionally, catalyzes the synthesis of the hydroxymethylpyrimidine phosphate (HMP-P) moiety of thiamine from aminoimidazole ribotide (AIR) in a radical S-adenosyl-L-methionine (SAM)-dependent reaction. The chain is Phosphomethylpyrimidine synthase from Clostridium botulinum (strain ATCC 19397 / Type A).